The primary structure comprises 302 residues: Uroporphyrinogen-III synthase, chloroplastic (302 aa).

A disordered region spans residues 1 to 39 (MALSSSSHLLPFSRPPATFPRARHAGGGRGRAGATGRFI). A chloroplast-targeting transit peptide spans 1–50 (MALSSSSHLLPFSRPPATFPRARHAGGGRGRAGATGRFIACSSPPPPDVV).

Belongs to the uroporphyrinogen-III synthase family.

It localises to the plastid. The protein resides in the chloroplast. The enzyme catalyses hydroxymethylbilane = uroporphyrinogen III + H2O. It participates in porphyrin-containing compound metabolism; protoporphyrin-IX biosynthesis; coproporphyrinogen-III from 5-aminolevulinate: step 3/4. Functionally, catalyzes cyclization of the linear tetrapyrrole, hydroxymethylbilane, to the macrocyclic uroporphyrinogen III, a precursor of tetrapyrroles such as chlorophyll, heme and phycobilins. The protein is Uroporphyrinogen-III synthase, chloroplastic (UROS) of Oryza sativa subsp. japonica (Rice).